The following is a 374-amino-acid chain: Chaperone protein DnaJ (374 aa).

The J domain maps to 5–70 (CYYEILNVSK…GKRSRYDQFG (66 aa)). The CR-type zinc-finger motif lies at 130–207 (GVEKEINIPR…CYGSGKIKKQ (78 aa)). Zn(2+) contacts are provided by Cys-143, Cys-146, Cys-159, Cys-162, Cys-181, Cys-184, Cys-195, and Cys-198. 4 CXXCXGXG motif repeats span residues 143 to 150 (CDSCDGTG), 159 to 166 (CHACHGQG), 181 to 188 (CPVCNGTG), and 195 to 202 (CDDCYGSG).

This sequence belongs to the DnaJ family. Homodimer. It depends on Zn(2+) as a cofactor.

It localises to the cytoplasm. Participates actively in the response to hyperosmotic and heat shock by preventing the aggregation of stress-denatured proteins and by disaggregating proteins, also in an autonomous, DnaK-independent fashion. Unfolded proteins bind initially to DnaJ; upon interaction with the DnaJ-bound protein, DnaK hydrolyzes its bound ATP, resulting in the formation of a stable complex. GrpE releases ADP from DnaK; ATP binding to DnaK triggers the release of the substrate protein, thus completing the reaction cycle. Several rounds of ATP-dependent interactions between DnaJ, DnaK and GrpE are required for fully efficient folding. Also involved, together with DnaK and GrpE, in the DNA replication of plasmids through activation of initiation proteins. The chain is Chaperone protein DnaJ from Francisella philomiragia subsp. philomiragia (strain ATCC 25017 / CCUG 19701 / FSC 153 / O#319-036).